A 311-amino-acid polypeptide reads, in one-letter code: tRNA dimethylallyltransferase (311 aa).

An ATP-binding site is contributed by Gly-9 to Thr-16. Thr-11 to Thr-16 contributes to the substrate binding site. Residues Asp-34–Gln-37 form an interaction with substrate tRNA region.

Belongs to the IPP transferase family. As to quaternary structure, monomer. Mg(2+) is required as a cofactor.

It catalyses the reaction adenosine(37) in tRNA + dimethylallyl diphosphate = N(6)-dimethylallyladenosine(37) in tRNA + diphosphate. In terms of biological role, catalyzes the transfer of a dimethylallyl group onto the adenine at position 37 in tRNAs that read codons beginning with uridine, leading to the formation of N6-(dimethylallyl)adenosine (i(6)A). This Clostridium botulinum (strain Okra / Type B1) protein is tRNA dimethylallyltransferase.